The primary structure comprises 365 residues: Paraneoplastic antigen Ma2 homolog (365 aa).

Alanine 2 carries the post-translational modification N-acetylalanine. The interval 336–365 is disordered; that stretch reads EEEDAYFEQESREEPGEREGSGCWNNSRNN. The segment covering 344–355 has biased composition (basic and acidic residues); sequence QESREEPGEREG.

The protein belongs to the PNMA family. Expressed in the cerebrum, cerebellum and testis.

It localises to the nucleus. The protein localises to the nucleolus. This chain is Paraneoplastic antigen Ma2 homolog (Pnma2), found in Mus musculus (Mouse).